Consider the following 149-residue polypeptide: Nucleoside diphosphate kinase (149 aa).

Residues Lys-9, Phe-57, Arg-85, Thr-91, Arg-102, and Asn-112 each contribute to the ATP site. The active-site Pros-phosphohistidine intermediate is the His-115.

Belongs to the NDK family. In terms of assembly, homotetramer. Mg(2+) is required as a cofactor.

It is found in the cytoplasm. It catalyses the reaction a 2'-deoxyribonucleoside 5'-diphosphate + ATP = a 2'-deoxyribonucleoside 5'-triphosphate + ADP. The catalysed reaction is a ribonucleoside 5'-diphosphate + ATP = a ribonucleoside 5'-triphosphate + ADP. Its function is as follows. Major role in the synthesis of nucleoside triphosphates other than ATP. The ATP gamma phosphate is transferred to the NDP beta phosphate via a ping-pong mechanism, using a phosphorylated active-site intermediate. The polypeptide is Nucleoside diphosphate kinase (Nostoc punctiforme (strain ATCC 29133 / PCC 73102)).